The chain runs to 968 residues: RNA polymerase-associated protein RapA (968 aa).

The 171-residue stretch at 164 to 334 folds into the Helicase ATP-binding domain; the sequence is DVGRRHAPRV…FARLRLLDPN (171 aa). 177–184 serves as a coordination point for ATP; that stretch reads DEVGLGKT. The short motif at 280–283 is the DEAH box element; the sequence is DEAH. One can recognise a Helicase C-terminal domain in the interval 490–644; sequence RVEWLMGYLT…TCPTGRAIYD (155 aa).

The protein belongs to the SNF2/RAD54 helicase family. RapA subfamily. In terms of assembly, interacts with the RNAP. Has a higher affinity for the core RNAP than for the holoenzyme. Its ATPase activity is stimulated by binding to RNAP.

Its function is as follows. Transcription regulator that activates transcription by stimulating RNA polymerase (RNAP) recycling in case of stress conditions such as supercoiled DNA or high salt concentrations. Probably acts by releasing the RNAP, when it is trapped or immobilized on tightly supercoiled DNA. Does not activate transcription on linear DNA. Probably not involved in DNA repair. This chain is RNA polymerase-associated protein RapA, found in Salmonella arizonae (strain ATCC BAA-731 / CDC346-86 / RSK2980).